Consider the following 859-residue polypeptide: DNA mismatch repair protein MutS (859 aa).

ATP is bound at residue 617–624; that stretch reads GPNMGGKS. The tract at residues 799-821 is disordered; it reads ETTSLPHEQPRAKPGKPAVPQQS.

Belongs to the DNA mismatch repair MutS family.

Functionally, this protein is involved in the repair of mismatches in DNA. It is possible that it carries out the mismatch recognition step. This protein has a weak ATPase activity. This Pseudomonas savastanoi pv. phaseolicola (strain 1448A / Race 6) (Pseudomonas syringae pv. phaseolicola (strain 1448A / Race 6)) protein is DNA mismatch repair protein MutS.